The sequence spans 688 residues: Polyphosphate kinase (688 aa).

Asn-45 is a binding site for ATP. Residues Arg-375 and Arg-405 each contribute to the Mg(2+) site. One can recognise a PLD phosphodiesterase domain in the interval 430 to 464 (PGLKIHAKLFLISRKEGDDVVRYAHIGTGNFNEKT). Catalysis depends on His-435, which acts as the Phosphohistidine intermediate. ATP-binding residues include Tyr-468, Arg-564, and His-592.

Belongs to the polyphosphate kinase 1 (PPK1) family. Mg(2+) serves as cofactor. An intermediate of this reaction is the autophosphorylated ppk in which a phosphate is covalently linked to a histidine residue through a N-P bond.

The catalysed reaction is [phosphate](n) + ATP = [phosphate](n+1) + ADP. Its function is as follows. Catalyzes the reversible transfer of the terminal phosphate of ATP to form a long-chain polyphosphate (polyP). The sequence is that of Polyphosphate kinase from Salmonella typhimurium (strain LT2 / SGSC1412 / ATCC 700720).